A 145-amino-acid polypeptide reads, in one-letter code: 3-dehydroquinate dehydratase (145 aa).

The active-site Proton acceptor is Tyr23. Positions 74, 80, and 87 each coordinate substrate. Catalysis depends on His100, which acts as the Proton donor. Substrate is bound by residues 101–102 and Arg111; that span reads IS.

It belongs to the type-II 3-dehydroquinase family. As to quaternary structure, homododecamer.

The catalysed reaction is 3-dehydroquinate = 3-dehydroshikimate + H2O. It functions in the pathway metabolic intermediate biosynthesis; chorismate biosynthesis; chorismate from D-erythrose 4-phosphate and phosphoenolpyruvate: step 3/7. Functionally, catalyzes a trans-dehydration via an enolate intermediate. The polypeptide is 3-dehydroquinate dehydratase (Dictyoglomus turgidum (strain DSM 6724 / Z-1310)).